A 613-amino-acid chain; its full sequence is Penicillin-binding protein activator LpoA (613 aa).

Positions 1-29 (MNSMLNFTHKRKSVSRLLAPVALAVILAG) are cleaved as a signal peptide. Cys-30 is lipidated: N-palmitoyl cysteine. Cys-30 carries the S-diacylglycerol cysteine lipid modification.

This sequence belongs to the LpoA family. In terms of assembly, interacts with PBP1a.

It is found in the cell outer membrane. Its function is as follows. Regulator of peptidoglycan synthesis that is essential for the function of penicillin-binding protein 1A (PBP1a). In Photobacterium profundum (strain SS9), this protein is Penicillin-binding protein activator LpoA.